Consider the following 237-residue polypeptide: Sugar fermentation stimulation protein homolog (237 aa).

It belongs to the SfsA family.

In Pseudomonas putida (strain ATCC 700007 / DSM 6899 / JCM 31910 / BCRC 17059 / LMG 24140 / F1), this protein is Sugar fermentation stimulation protein homolog.